A 395-amino-acid chain; its full sequence is Probable L-tyrosine/L-aspartate decarboxylase (395 aa).

The residue at position 242 (K242) is an N6-(pyridoxal phosphate)lysine.

The protein belongs to the group II decarboxylase family. MfnA subfamily. It depends on pyridoxal 5'-phosphate as a cofactor.

The enzyme catalyses L-tyrosine + H(+) = tyramine + CO2. It carries out the reaction L-aspartate + H(+) = beta-alanine + CO2. It participates in cofactor biosynthesis; methanofuran biosynthesis. Its pathway is cofactor biosynthesis; coenzyme A biosynthesis. Its function is as follows. Catalyzes the decarboxylation of L-tyrosine to produce tyramine for methanofuran biosynthesis. Can also catalyze the decarboxylation of L-aspartate to produce beta-alanine for coenzyme A (CoA) biosynthesis. This chain is Probable L-tyrosine/L-aspartate decarboxylase, found in Methanosarcina barkeri (strain Fusaro / DSM 804).